We begin with the raw amino-acid sequence, 407 residues long: MRWVWALLKNASLAGAPKYIEHFSKFSPSPLSMKQFLDFGSSNACEKTSFTFLRQELPVRLANIMKEINLLPDRVLSTPSVQLVQSWYVQSLLDIMEFLDKDPEDHRTLSQFTDALVTIRNRHNDVVPTMAQGVLEYKDTYGDDPVSNQNIQYFLDRFYLSRISIRMLINQHTLIFDGSTNPAHPKHIGSIDPNCNVSEVVKDAYDMAKLLCDKYYMASPDLEIQEINAANSKQPIHMVYVPSHLYHMLFELFKNAMRATVESHESSLILPPIKVMVALGEEDLSIKMSDRGGGVPLRKIERLFSYMYSTAPTPQPGTGGTPLAGFGYGLPISRLYAKYFQGDLQLFSMEGFGTDAVIYLKALSTDSVERLPVYNKSAWRHYQTIQEAGDWCVPSTEPKNTSTYRVS.

One can recognise a Histidine kinase domain in the interval 135 to 364 (LEYKDTYGDD…DAVIYLKALS (230 aa)). 2 positions are modified to phosphotyrosine: Tyr-215 and Tyr-216. ATP is bound by residues 251-258 (ELFKNAMR), Asp-290, 309-310 (ST), and 325-330 (GFGYGL). The residue at position 376 (Lys-376) is an N6-succinyllysine.

It belongs to the PDK/BCKDK protein kinase family. In terms of assembly, homodimer, and heterodimer with PDK1. Interacts with the pyruvate dehydrogenase complex subunit DLAT, and is part of the multimeric pyruvate dehydrogenase complex that contains multiple copies of pyruvate dehydrogenase (E1), dihydrolipoamide acetyltransferase (DLAT, E2) and lipoamide dehydrogenase (DLD, E3). In terms of tissue distribution, expressed in many tissues, with the highest level in heart and skeletal muscle, intermediate levels in brain, kidney, pancreas and liver, and low levels in placenta and lung.

It is found in the mitochondrion matrix. It catalyses the reaction L-seryl-[pyruvate dehydrogenase E1 alpha subunit] + ATP = O-phospho-L-seryl-[pyruvate dehydrogenase E1 alpha subunit] + ADP + H(+). With respect to regulation, activity is enhanced by binding to the pyruvate dehydrogenase subunit DLAT. Inhibited by ADP and pyruvate; these compounds interfere with DLAT binding and thereby inhibit kinase activity. Inhibited by dichloroacetate. Inhibited by AZD7545; this compound interferes with DLAT binding and thereby inhibits kinase activity. Functionally, kinase that plays a key role in the regulation of glucose and fatty acid metabolism and homeostasis via phosphorylation of the pyruvate dehydrogenase subunits PDHA1 and PDHA2. This inhibits pyruvate dehydrogenase activity, and thereby regulates metabolite flux through the tricarboxylic acid cycle, down-regulates aerobic respiration and inhibits the formation of acetyl-coenzyme A from pyruvate. Inhibition of pyruvate dehydrogenase decreases glucose utilization and increases fat metabolism. Mediates cellular responses to insulin. Plays an important role in maintaining normal blood glucose levels and in metabolic adaptation to nutrient availability. Via its regulation of pyruvate dehydrogenase activity, plays an important role in maintaining normal blood pH and in preventing the accumulation of ketone bodies under starvation. Plays a role in the regulation of cell proliferation and in resistance to apoptosis under oxidative stress. Plays a role in p53/TP53-mediated apoptosis. In Homo sapiens (Human), this protein is [Pyruvate dehydrogenase (acetyl-transferring)] kinase isozyme 2, mitochondrial (PDK2).